The sequence spans 294 residues: tRNA pseudouridine synthase B (294 aa).

Catalysis depends on Asp-39, which acts as the Nucleophile.

The protein belongs to the pseudouridine synthase TruB family. Type 1 subfamily.

It catalyses the reaction uridine(55) in tRNA = pseudouridine(55) in tRNA. Its function is as follows. Responsible for synthesis of pseudouridine from uracil-55 in the psi GC loop of transfer RNAs. In Streptococcus pyogenes serotype M28 (strain MGAS6180), this protein is tRNA pseudouridine synthase B.